The primary structure comprises 61 residues: Furostanol glycoside 26-O-beta-glucosidase (61 aa).

The Proton donor/acceptor role is filled by Asp-33. Asp-33 is a binding site for D-glucose.

This sequence belongs to the glycosyl hydrolase 3 family. In terms of assembly, monomer. Post-translationally, glycosylated. In terms of tissue distribution, expressed in petioles and leaves, but not in fruits.

The enzyme catalyses protodioscin + H2O = 26-deglucoprotodioscin + D-glucose. Inhibited by Hg(2+) and D-glucono-1,5-lactone. Its function is as follows. Beta-glucosidase highly specific for the cleavage of C-26-bound glucose moiety of furostanol glycosides torvosides A and H. Hydrolyzes only p-nitrophenyl-beta-glucoside, but not p-nitrophenyl-beta-D-fucoside, p-nitrophenyl-beta-L-fucoside, p-nitrophenyl-beta-D-xyloside, p-nitrophenyl-beta-D-galactoside, p-nitrophenyl-beta-D-NAc-glucosamine, p-nitrophenyl-beta-D-mannoside or any of the p-nitrophenyl-alpha-glycosides tested. This chain is Furostanol glycoside 26-O-beta-glucosidase, found in Solanum torvum (Turkey berry).